A 636-amino-acid polypeptide reads, in one-letter code: MPPVRAEKKRKTDLIEQVCVTNKAGELVDLEDVLEYGPYSLTGILSSEKDEQEPLFDESIVLGYSIKISPVWTYNLKDVPEKETMSIWIVTPQRRYGILSPSSEYKAIYEQISEKNRLFYLIKTKFKDDMISGTLEDYDNYIEVLKEKLELPSCFQAILLVQKHIRFLLTQMVATSSLHVWSESPFFIRIRSSYEHLILQINKNIYNARQERKKSKLSSNNPSDNNTTMKSSLNQALTLINLPEQPFSISSPTATPQLGVVKRTSPLRFPLNDIWLSGLRIVDPNIESISLWKRIQVSTSPKHQRYISLQEVCSVIAQQLQITNLEALNKLSSHGETLLQIMHTAFTWRGTKLFNDIKHAIGFRSSVQQARSQFRGYCYDYLFMHCNNGEKTSLHLLRTLICMKLDFSNAQLAAKILFHFLLFDIGSGLSGSDYTYEQYINHSAVAFSFTEEIFEKNFVTVLPDFVKLFSISFGYWPAFSFYDELLKLLRNKYPKVYSSTPNLCDQVWLDRTNLFPCNRSTRSTLPYRPTKLLDLASASSCLSKKETDFKQDTGLYSYNLEKVEALKVSPDLQTGIWSCPVQNCLYFAVCDNPYKPSQVIYDHLLGHVDSKFIFKTPSNSVRSFTNKLEHIMYNIN.

Component of the Clr4 methyltransferase complex (ClrC) composed of at least clr4, rik1, pcu4, rbx1, raf1 and raf2. The cullin pcu4, rik1, raf1, raf2 and the ring-box protein rbx1 are components of an E3 ubiquitin ligase, whose activity is essential for heterochromatin assembly. Interacts with pcu4.

The protein localises to the cytoplasm. It is found in the mitochondrion. The protein resides in the nucleus. It localises to the chromosome. Component of the Clr4 methyltransferase complex (ClrC) which contributes to the establishment of heterochromatin by specifically methylating histone H3 to form H3K9me. ClrC preferentially ubiquitylates H3K14 and ClrC-mediated H3 ubiquitination promotes clr4 methyltransferase activity for the methylation of H3K9. H3K9me represents a specific tag for epigenetic transcriptional repression by recruiting swi6/HP1 to methylated histones which leads to transcriptional silencing within centromeric heterochromatin, telomeric regions and at the silent mating-type loci. Has a role in both mitotic and meiotic chromosome segregation. This is Rik1-associated factor 2 (raf2) from Schizosaccharomyces pombe (strain 972 / ATCC 24843) (Fission yeast).